The chain runs to 133 residues: IgW chain C region, secreted form 2 (133 aa).

The Ig-like domain maps to 1-71 (VISGFYPDSV…TGSRFNDRIS (71 aa)). N-linked (GlcNAc...) asparagine glycans are attached at residues Asn32 and Asn112. The secretory tail stretch occupies residues 76–133 (KGGTVNLPVPGGNTPCTCPPSSCSGCMPKLVYQTDLNVTLENGGQLQYNCHQQACKIK).

In terms of tissue distribution, expressed mainly in lymphoid tissues including spleen, epigonal organ and circulating lymphocytes.

It is found in the secreted. The sequence is that of IgW chain C region, secreted form 2 from Heterodontus francisci (Horn shark).